The chain runs to 375 residues: Alcohol dehydrogenase 3, mitochondrial (375 aa).

A mitochondrion-targeting transit peptide spans 1–24 (MLRTSTLFTRRVQPSLFSRNILRL). Cysteine 71 is a Zn(2+) binding site. Residues histidine 72, threonine 73, and histidine 76 each contribute to the NAD(+) site. Zn(2+) is bound by residues histidine 94, glutamate 95, cysteine 125, cysteine 128, cysteine 131, cysteine 139, and cysteine 181. Residues glycine 208, glycine 209, leucine 210, aspartate 229, lysine 234, phenylalanine 249, valine 296, serine 321, valine 323, and arginine 368 each coordinate NAD(+).

This sequence belongs to the zinc-containing alcohol dehydrogenase family. As to quaternary structure, homotetramer. Zn(2+) serves as cofactor.

The protein localises to the mitochondrion matrix. The protein resides in the mitochondrion inner membrane. It catalyses the reaction a primary alcohol + NAD(+) = an aldehyde + NADH + H(+). It carries out the reaction a secondary alcohol + NAD(+) = a ketone + NADH + H(+). The enzyme catalyses ethanol + NAD(+) = acetaldehyde + NADH + H(+). The catalysed reaction is butan-1-ol + NAD(+) = butanal + NADH + H(+). It catalyses the reaction hexan-1-ol + NAD(+) = hexanal + NADH + H(+). Mitochondrial isozyme that reduces acetaldehyde to ethanol during the fermentation of glucose. Involved in the shuttling of mitochondrial reducing equivalents to the cytosol, where the redox balance is restored by NADH dehydrogenases on the external side of the mitochondrial inner membrane. Shows a high affinity for alcohols with a double bond conjugated to the alcohol group. This chain is Alcohol dehydrogenase 3, mitochondrial (ADH3), found in Saccharomyces cerevisiae (strain ATCC 204508 / S288c) (Baker's yeast).